A 504-amino-acid chain; its full sequence is UDP-N-acetylmuramoylalanine--D-glutamate ligase (504 aa).

ATP is bound at residue 129–135; that stretch reads GTNGKTT.

Belongs to the MurCDEF family.

The protein localises to the cytoplasm. It carries out the reaction UDP-N-acetyl-alpha-D-muramoyl-L-alanine + D-glutamate + ATP = UDP-N-acetyl-alpha-D-muramoyl-L-alanyl-D-glutamate + ADP + phosphate + H(+). It functions in the pathway cell wall biogenesis; peptidoglycan biosynthesis. Functionally, cell wall formation. Catalyzes the addition of glutamate to the nucleotide precursor UDP-N-acetylmuramoyl-L-alanine (UMA). The polypeptide is UDP-N-acetylmuramoylalanine--D-glutamate ligase (Burkholderia mallei (strain NCTC 10247)).